Here is a 1391-residue protein sequence, read N- to C-terminus: Nuclear pore complex protein Nup155 (1391 aa).

O-linked (GlcNAc) serine glycosylation occurs at Ser526. Disordered stretches follow at residues Ser604–Pro630 and Gln985–Ser1012. Ser1057 carries the phosphoserine modification.

This sequence belongs to the non-repetitive/WGA-negative nucleoporin family. Interacts with GLE1 and NUP35/NUP53. Able to form a heterotrimer with GLE1 and NUP42 in vitro. Forms a complex with NUP35, NUP93, NUP205 and lamin B. Post-translationally, phosphorylated. Phosphorylation and dephosphorylation may be important for the function of NUP155 and may play a role in the reversible disassembly of the nuclear pore complex during mitosis. In terms of processing, disulfide-linked to NUP62. The inner channel of the NPC has a different redox environment from the cytoplasm and allows the formation of interchain disulfide bonds between some nucleoporins, the significant increase of these linkages upon oxidative stress reduces the permeability of the NPC.

It is found in the nucleus. The protein resides in the nuclear pore complex. Its subcellular location is the nucleus membrane. Its function is as follows. Essential component of nuclear pore complex. Could be essessential for embryogenesis. Nucleoporins may be involved both in binding and translocating proteins during nucleocytoplasmic transport. In Mus musculus (Mouse), this protein is Nuclear pore complex protein Nup155 (Nup155).